A 274-amino-acid chain; its full sequence is Ribosomal RNA small subunit methyltransferase A (274 aa).

S-adenosyl-L-methionine contacts are provided by His-15, Leu-17, Gly-42, Glu-64, Asp-89, and Asn-109.

Belongs to the class I-like SAM-binding methyltransferase superfamily. rRNA adenine N(6)-methyltransferase family. RsmA subfamily.

It localises to the cytoplasm. It catalyses the reaction adenosine(1518)/adenosine(1519) in 16S rRNA + 4 S-adenosyl-L-methionine = N(6)-dimethyladenosine(1518)/N(6)-dimethyladenosine(1519) in 16S rRNA + 4 S-adenosyl-L-homocysteine + 4 H(+). Its function is as follows. Specifically dimethylates two adjacent adenosines (A1518 and A1519) in the loop of a conserved hairpin near the 3'-end of 16S rRNA in the 30S particle. May play a critical role in biogenesis of 30S subunits. This Synechococcus sp. (strain CC9902) protein is Ribosomal RNA small subunit methyltransferase A.